Consider the following 444-residue polypeptide: Cadaverine/lysine antiporter (444 aa).

12 consecutive transmembrane segments (helical) span residues 7–27, 35–55, 95–115, 123–143, 149–169, 193–213, 222–242, 273–293, 323–343, 354–374, 384–404, and 405–425; these read IGLF…GIAL, IGGI…SLAY, IGNL…FPVL, IACI…GTWV, IGLV…WHWF, ILLC…TGMV, LATM…TQVL, LVSA…MMLV, LLLA…MNSA, LTGI…VDLI, FVSL…LMGA, and SSFE…FYAR.

It belongs to the amino acid-polyamine-organocation (APC) superfamily. Basic amino acid/polyamine antiporter (APA) (TC 2.A.3.2) family.

The protein resides in the cell inner membrane. The enzyme catalyses cadaverine(in) + L-lysine(out) = cadaverine(out) + L-lysine(in). Its function is as follows. Under acidic conditions, in the presence of lysine, functions as a cadaverine:lysine antiporter that facilitates the excretion of cadaverine and the uptake of lysine. The polypeptide is Cadaverine/lysine antiporter (cadB) (Escherichia coli O157:H7).